The primary structure comprises 20 residues: Blooming-related protein 2 (20 aa).

The interval 1–20 (VSAEYLERQGPKDDXDCFDD) is disordered.

Its function is as follows. Possible 'checkpoint' protein for cell division in the blooming process. This is Blooming-related protein 2 from Prorocentrum triestinum (Red tide alga).